Reading from the N-terminus, the 929-residue chain is Protein transport protein Sec16B (929 aa).

A compositionally biased stretch (pro residues) spans 1–10 (MEPWDPPQLP). The segment at 1-64 (MEPWDPPQLP…RPASQAESYE (64 aa)) is disordered. The central conserved domain (CCD); required for localization to endoplasmic reticulum exit sites stretch occupies residues 228 to 669 (APHKFLQPHV…LRTYCQHCQV (442 aa)). Disordered regions lie at residues 675-727 (PEVA…QDVS) and 781-929 (LSTR…PNPL). The span at 694-710 (EMVHEQPHSDGPHDEQW) shows a compositional bias: basic and acidic residues. Low complexity predominate over residues 781 to 795 (LSTRARSASESSTAS). A compositionally biased stretch (polar residues) spans 838 to 848 (PKATTSGSPTP). Pro residues predominate over residues 856-871 (PSPPGAVPSAQPPASP).

The protein belongs to the SEC16 family. SEC16A and SEC16B are each present in multiple copies in a heteromeric complex.

The protein resides in the endoplasmic reticulum membrane. Its subcellular location is the golgi apparatus membrane. Plays a role in the organization of the endoplasmic reticulum exit sites (ERES), also known as transitional endoplasmic reticulum (tER). Required for secretory cargo traffic from the endoplasmic reticulum to the Golgi apparatus. Involved in peroxisome biogenesis. Regulates the transport of peroxisomal biogenesis factors PEX3 and PEX16 from the ER to peroxisomes. The protein is Protein transport protein Sec16B (SEC16B) of Gallus gallus (Chicken).